A 109-amino-acid polypeptide reads, in one-letter code: U3-lycotoxin-Ls1x (109 aa).

The signal sequence occupies residues 1–20; sequence MKFVLLFGVLLVTLFSYSSA. Positions 21-44 are excised as a propeptide; it reads EMLDDFDQADEDELLSLIEKEEAR. Intrachain disulfides connect Cys48–Cys63, Cys55–Cys72, Cys62–Cys88, and Cys74–Cys86.

This sequence belongs to the neurotoxin 19 (CSTX) family. 01 subfamily. As to expression, expressed by the venom gland.

The protein resides in the secreted. The polypeptide is U3-lycotoxin-Ls1x (Lycosa singoriensis (Wolf spider)).